Here is a 318-residue protein sequence, read N- to C-terminus: uncharacterized protein (318 aa).

A disordered region spans residues 19-63; that stretch reads VPPDARHHEPRPGMTDHPDTGNGIGLTGRPPRAIPDPAPRSSHGP. The span at 21–37 shows a compositional bias: basic and acidic residues; it reads PDARHHEPRPGMTDHPD. 72 to 79 lines the ATP pocket; sequence QKGGVGKT.

Belongs to the ParA family.

Functionally, may play a role in septum formation. This is an uncharacterized protein from Mycobacterium tuberculosis (strain CDC 1551 / Oshkosh).